Consider the following 440-residue polypeptide: Methionine aminopeptidase 2-2 (440 aa).

The disordered stretch occupies residues 1 to 102; that stretch reads MAAQVPTEAL…KGQEEEYRDE (102 aa). Acidic residues predominate over residues 36-46; the sequence is DSDDSDEEGEE. Positions 56–70 are enriched in basic residues; the sequence is AKKKKKNKKKKKKKS. Residue His-194 coordinates substrate. 3 residues coordinate a divalent metal cation: Asp-214, Asp-225, and His-294. His-302 is a binding site for substrate. The a divalent metal cation site is built by Glu-327 and Glu-421.

It belongs to the peptidase M24A family. Methionine aminopeptidase eukaryotic type 2 subfamily. Co(2+) is required as a cofactor. The cofactor is Zn(2+). Mn(2+) serves as cofactor. Requires Fe(2+) as cofactor.

Its subcellular location is the cytoplasm. The catalysed reaction is Release of N-terminal amino acids, preferentially methionine, from peptides and arylamides.. Its function is as follows. Cotranslationally removes the N-terminal methionine from nascent proteins. The N-terminal methionine is often cleaved when the second residue in the primary sequence is small and uncharged (Met-Ala-, Cys, Gly, Pro, Ser, Thr, or Val). This chain is Methionine aminopeptidase 2-2, found in Colletotrichum graminicola (strain M1.001 / M2 / FGSC 10212) (Maize anthracnose fungus).